Here is a 449-residue protein sequence, read N- to C-terminus: Neurexin-1a-beta (449 aa).

The first 38 residues, 1–38 (MLRLWPGGAPGGLASILLRISLRLALWLPPLTLGSALA), serve as a signal peptide directing secretion. Residues 39–373 (EGPGELYVPQ…EVIRESSSTT (335 aa)) are Extracellular-facing. The Laminin G-like domain maps to 71 to 272 (TTYIFGRDGG…DPNVRVEGSA (202 aa)). A disordered region spans residues 276 to 366 (GDMPSSSITP…AKGYPSPEVI (91 aa)). Positions 280–311 (SSSITPQSSVSAAGNRSETSPSITDITTTTAS) are enriched in low complexity. Residues 312 to 322 (NRQGKQTTTPQ) show a composition bias toward polar residues. A helical membrane pass occupies residues 374 to 394 (GMVVGIVAAAALCILILLYAM). Residues 395 to 449 (YKYRNRDEGSYHVDESRNYISNSATQPNGAAVKEKPIGVPKNKKDKKNKDKEYYV) lie on the Cytoplasmic side of the membrane. The segment at 415-449 (SNSATQPNGAAVKEKPIGVPKNKKDKKNKDKEYYV) is disordered.

Belongs to the neurexin family.

The protein localises to the membrane. In terms of biological role, neuronal cell surface protein that may be involved in cell recognition and cell adhesion. May play a role in formation or maintenance of synaptic junctions. In Danio rerio (Zebrafish), this protein is Neurexin-1a-beta (nrxn1a).